A 541-amino-acid polypeptide reads, in one-letter code: Carboxypeptidase Y homolog A (541 aa).

A signal peptide spans 1-17 (MKTFTAALLVGTALAAV). The propeptide occupies 18–122 (PQQQPLQTQV…KLENYDLRVK (105 aa)). Disulfide bonds link Cys177/Cys416, Cys311/Cys325, Cys335/Cys358, Cys342/Cys351, and Cys380/Cys386. Asn208 is a glycosylation site (N-linked (GlcNAc...) asparagine). Ser264 is an active-site residue. The active site involves Asp455. 3 N-linked (GlcNAc...) asparagine glycosylation sites follow: Asn485, Asn491, and Asn506. His517 is a catalytic residue.

Belongs to the peptidase S10 family.

It is found in the vacuole. It carries out the reaction Release of a C-terminal amino acid with broad specificity.. Its function is as follows. Vacuolar carboxypeptidase involved in degradation of small peptides. Digests preferentially peptides containing an aliphatic or hydrophobic residue in P1' position, as well as methionine, leucine or phenylalanine in P1 position of ester substrate. This is Carboxypeptidase Y homolog A (cpyA) from Uncinocarpus reesii (strain UAMH 1704).